A 137-amino-acid chain; its full sequence is Fructose-bisphosphate aldolase C (137 aa).

Lys3 acts as the Schiff-base intermediate with dihydroxyacetone-P in catalysis.

The protein belongs to the class I fructose-bisphosphate aldolase family. Homotetramer.

The enzyme catalyses beta-D-fructose 1,6-bisphosphate = D-glyceraldehyde 3-phosphate + dihydroxyacetone phosphate. The protein operates within carbohydrate degradation; glycolysis; D-glyceraldehyde 3-phosphate and glycerone phosphate from D-glucose: step 4/4. This Gallus gallus (Chicken) protein is Fructose-bisphosphate aldolase C (ALDOC).